We begin with the raw amino-acid sequence, 344 residues long: Phosphoribosylformylglycinamidine cyclo-ligase (344 aa).

It belongs to the AIR synthase family.

The protein localises to the cytoplasm. It carries out the reaction 2-formamido-N(1)-(5-O-phospho-beta-D-ribosyl)acetamidine + ATP = 5-amino-1-(5-phospho-beta-D-ribosyl)imidazole + ADP + phosphate + H(+). Its pathway is purine metabolism; IMP biosynthesis via de novo pathway; 5-amino-1-(5-phospho-D-ribosyl)imidazole from N(2)-formyl-N(1)-(5-phospho-D-ribosyl)glycinamide: step 2/2. In Exiguobacterium sp. (strain ATCC BAA-1283 / AT1b), this protein is Phosphoribosylformylglycinamidine cyclo-ligase.